Consider the following 370-residue polypeptide: Histidinol-phosphate aminotransferase 3 (370 aa).

The residue at position 229 (Lys-229) is an N6-(pyridoxal phosphate)lysine.

Belongs to the class-II pyridoxal-phosphate-dependent aminotransferase family. Histidinol-phosphate aminotransferase subfamily. In terms of assembly, homodimer. It depends on pyridoxal 5'-phosphate as a cofactor.

It catalyses the reaction L-histidinol phosphate + 2-oxoglutarate = 3-(imidazol-4-yl)-2-oxopropyl phosphate + L-glutamate. It participates in amino-acid biosynthesis; L-histidine biosynthesis; L-histidine from 5-phospho-alpha-D-ribose 1-diphosphate: step 7/9. The sequence is that of Histidinol-phosphate aminotransferase 3 (hisC3) from Rhizobium meliloti (strain 1021) (Ensifer meliloti).